A 295-amino-acid chain; its full sequence is Trimeric intracellular cation channel type 1B.1 (295 aa).

The Lumenal segment spans residues 1–27 (MVVPESFQLDQEILLDAGAQLHRLKMY). Residues 28 to 45 (PYFDVAHYLLMIIEVRDD) traverse the membrane as a helical segment. Topologically, residues 46–56 (LGSAASIFSRK) are cytoplasmic. A discontinuously helical membrane pass occupies residues 57 to 80 (HPLSCWLSSMLMCFADAFLANFLL). The Lumenal portion of the chain corresponds to 81–89 (GEPVIAPFK). The helical transmembrane segment at 90-107 (RHDDIILATIIWYLVFYA) threads the bilayer. At 108–119 (PFDGIYKIAKIT) the chain is on the cytoplasmic side. The helical transmembrane segment at 120-148 (PVKCVLAVMKEVKRAYKVSHGVSHAAKLY) threads the bilayer. Positions 129 and 133 each coordinate a 1,2-diacyl-sn-glycero-3-phospho-(1D-myo-inositol-4,5-bisphosphate). At 149-150 (PN) the chain is on the lumenal side. Residues 151 to 177 (SYIVQVLVGTAKGAGSGIVRTLEQLVR) traverse the membrane as a discontinuously helical segment. Ser166 contacts a 1,2-diacyl-sn-glycero-3-phospho-(1D-myo-inositol-4,5-bisphosphate). At 178–188 (GVWLPTHNELL) the chain is on the cytoplasmic side. The helical transmembrane segment at 189–210 (RPSFATKACVVAASVLALEKSG) threads the bilayer. Over 211–215 (TYLTA) the chain is Lumenal. A helical transmembrane segment spans residues 216-239 (PHDLVYLVIVGFFVYFKLSAVILH). Over 240–295 (VTDPFAPIENLFCAIFMGGIWDAVSRALAASRDRRAAGAHSNENGSSISTPEKKDQ) the chain is Cytoplasmic. Residues 274-295 (RAAGAHSNENGSSISTPEKKDQ) form a disordered region.

The protein belongs to the TMEM38 family. In terms of assembly, homotrimer; trimerization probably requires binding to phosphatidylinositol 4,5-bisphosphate (PIP2).

Its subcellular location is the endoplasmic reticulum membrane. In terms of biological role, potassium channel that mediates transmembrane potassium transport. Might be required for maintenance of rapid intracellular calcium release. May act as a counter-ion channel that functions in synchronization with calcium release from intracellular stores. Binds phosphatidylinositol 4,5-bisphosphate (PIP2). The protein is Trimeric intracellular cation channel type 1B.1 of Caenorhabditis elegans.